Consider the following 454-residue polypeptide: Bifunctional protein GlmU (454 aa).

The tract at residues 1 to 225 (MNIVILAAGM…VWETLGVNSK (225 aa)) is pyrophosphorylase. Residues 6-9 (LAAG), lysine 20, glutamine 71, 76-77 (GT), 98-100 (YGD), glycine 135, glutamate 150, asparagine 165, and asparagine 223 contribute to the UDP-N-acetyl-alpha-D-glucosamine site. Aspartate 100 contacts Mg(2+). Asparagine 223 lines the Mg(2+) pocket. The segment at 226-246 (LQLAEVERIHQGNQARRLLEA) is linker. The segment at 247–454 (GVTLLDPARI…WQRPVKQPKQ (208 aa)) is N-acetyltransferase. Residues arginine 329 and lysine 347 each contribute to the UDP-N-acetyl-alpha-D-glucosamine site. The active-site Proton acceptor is the histidine 359. UDP-N-acetyl-alpha-D-glucosamine is bound by residues tyrosine 362 and asparagine 373. Residues alanine 376, 382-383 (NY), serine 401, alanine 419, and arginine 436 contribute to the acetyl-CoA site.

It in the N-terminal section; belongs to the N-acetylglucosamine-1-phosphate uridyltransferase family. The protein in the C-terminal section; belongs to the transferase hexapeptide repeat family. In terms of assembly, homotrimer. Mg(2+) is required as a cofactor.

The protein localises to the cytoplasm. The catalysed reaction is alpha-D-glucosamine 1-phosphate + acetyl-CoA = N-acetyl-alpha-D-glucosamine 1-phosphate + CoA + H(+). The enzyme catalyses N-acetyl-alpha-D-glucosamine 1-phosphate + UTP + H(+) = UDP-N-acetyl-alpha-D-glucosamine + diphosphate. It functions in the pathway nucleotide-sugar biosynthesis; UDP-N-acetyl-alpha-D-glucosamine biosynthesis; N-acetyl-alpha-D-glucosamine 1-phosphate from alpha-D-glucosamine 6-phosphate (route II): step 2/2. Its pathway is nucleotide-sugar biosynthesis; UDP-N-acetyl-alpha-D-glucosamine biosynthesis; UDP-N-acetyl-alpha-D-glucosamine from N-acetyl-alpha-D-glucosamine 1-phosphate: step 1/1. The protein operates within bacterial outer membrane biogenesis; LPS lipid A biosynthesis. In terms of biological role, catalyzes the last two sequential reactions in the de novo biosynthetic pathway for UDP-N-acetylglucosamine (UDP-GlcNAc). The C-terminal domain catalyzes the transfer of acetyl group from acetyl coenzyme A to glucosamine-1-phosphate (GlcN-1-P) to produce N-acetylglucosamine-1-phosphate (GlcNAc-1-P), which is converted into UDP-GlcNAc by the transfer of uridine 5-monophosphate (from uridine 5-triphosphate), a reaction catalyzed by the N-terminal domain. The sequence is that of Bifunctional protein GlmU from Cupriavidus taiwanensis (strain DSM 17343 / BCRC 17206 / CCUG 44338 / CIP 107171 / LMG 19424 / R1) (Ralstonia taiwanensis (strain LMG 19424)).